A 528-amino-acid polypeptide reads, in one-letter code: 3-ketoacyl-CoA synthase 2 (528 aa).

2 helical membrane passes run 36-56 (LGYH…VGLL) and 78-98 (FHFL…TLYF). Residues 97-388 (YFTTRPRRIF…FFATLVARKV (292 aa)) form the FAE domain. Catalysis depends on residues Cys241, His320, His407, His411, and Asn444.

Belongs to the thiolase-like superfamily. Chalcone/stilbene synthases family. As to expression, expressed in siliques, flowers and stems. In young seedlings, expressed in the central cylinder of primary roots, in emerging lateral roots and in their root cap, but not in aboveground tissues such as hypocotyls, cotyledons and leaves. Expressed in sepals in mature flowers and in the chalaza and micropyle region of developing seeds shortly prior to or just after the detachment from the funiculus. Expressed in roots, flowers, cauline leaves and siliques.

The protein resides in the membrane. It catalyses the reaction a very-long-chain acyl-CoA + malonyl-CoA + H(+) = a very-long-chain 3-oxoacyl-CoA + CO2 + CoA. It functions in the pathway lipid metabolism; fatty acid biosynthesis. Inhibited by K3 herbicides such as allidochlor, anilofos, cafenstrole and flufenacet. Strongly inhibited by metazachlor. Its function is as follows. Mediates the synthesis of VLCFAs from 22 to 26 carbons in length (e.g. C22, C24, C26). Involved in the elongation of C20 fatty acid suberin precursors. Functionally redundant with KCS20 in the two-carbon elongation of C22 fatty acids that is required for cuticular wax and root suberin biosynthesis. The chain is 3-ketoacyl-CoA synthase 2 from Arabidopsis thaliana (Mouse-ear cress).